The chain runs to 127 residues: Fluoride-specific ion channel FluC (127 aa).

Helical transmembrane passes span 4 to 24, 35 to 55, 71 to 91, and 103 to 123; these read LLLA…LLSM, LGTL…FAWF, TGFC…VFLL, and VFVN…LFSA. Na(+)-binding residues include Gly-75 and Thr-78.

It belongs to the fluoride channel Fluc/FEX (TC 1.A.43) family.

The protein localises to the cell inner membrane. It carries out the reaction fluoride(in) = fluoride(out). Its activity is regulated as follows. Na(+) is not transported, but it plays an essential structural role and its presence is essential for fluoride channel function. In terms of biological role, fluoride-specific ion channel. Important for reducing fluoride concentration in the cell, thus reducing its toxicity. The protein is Fluoride-specific ion channel FluC of Shigella flexneri serotype 5b (strain 8401).